Consider the following 158-residue polypeptide: Transcription elongation factor GreA (158 aa).

Belongs to the GreA/GreB family.

In terms of biological role, necessary for efficient RNA polymerase transcription elongation past template-encoded arresting sites. The arresting sites in DNA have the property of trapping a certain fraction of elongating RNA polymerases that pass through, resulting in locked ternary complexes. Cleavage of the nascent transcript by cleavage factors such as GreA or GreB allows the resumption of elongation from the new 3'terminus. GreA releases sequences of 2 to 3 nucleotides. This is Transcription elongation factor GreA from Sinorhizobium medicae (strain WSM419) (Ensifer medicae).